The chain runs to 221 residues: uncharacterized protein (221 aa).

The signal sequence occupies residues 1–26 (MVRLVPRAFAATVALLAAGFSPATAS).

This is an uncharacterized protein from Mycobacterium tuberculosis (strain ATCC 25618 / H37Rv).